An 884-amino-acid chain; its full sequence is Protein translocase subunit SecA (884 aa).

Residues Q83, 101-105 (GEGKT), and D491 each bind ATP.

The protein belongs to the SecA family.

It is found in the plastid. The protein localises to the chloroplast stroma. Its subcellular location is the chloroplast thylakoid membrane. The catalysed reaction is ATP + H2O + cellular proteinSide 1 = ADP + phosphate + cellular proteinSide 2.. In terms of biological role, has a central role in coupling the hydrolysis of ATP to the transfer of proteins across the thylakoid membrane. This chain is Protein translocase subunit SecA, found in Pyropia yezoensis (Susabi-nori).